The following is a 212-amino-acid chain: Adenylate kinase (212 aa).

Position 10 to 15 (10 to 15 (GAGKGT)) interacts with ATP. The tract at residues 30-59 (STGDMFRAAMANQTEMGTLAKSFIDKGELV) is NMP. AMP-binding positions include T31, R36, 57–59 (ELV), 86–89 (GYPR), and Q93. Positions 127–159 (GRIINRKTGETYHKVFNPPADYNEDDYYQREDD) are LID. ATP is bound by residues R128 and 137–138 (TY). AMP-binding residues include R156 and R167. Q195 provides a ligand contact to ATP.

Belongs to the adenylate kinase family. As to quaternary structure, monomer.

The protein resides in the cytoplasm. The enzyme catalyses AMP + ATP = 2 ADP. It functions in the pathway purine metabolism; AMP biosynthesis via salvage pathway; AMP from ADP: step 1/1. In terms of biological role, catalyzes the reversible transfer of the terminal phosphate group between ATP and AMP. Plays an important role in cellular energy homeostasis and in adenine nucleotide metabolism. The polypeptide is Adenylate kinase (Streptococcus mutans serotype c (strain ATCC 700610 / UA159)).